A 226-amino-acid chain; its full sequence is N-(5'-phosphoribosyl)anthranilate isomerase (226 aa).

The protein belongs to the TrpF family.

It catalyses the reaction N-(5-phospho-beta-D-ribosyl)anthranilate = 1-(2-carboxyphenylamino)-1-deoxy-D-ribulose 5-phosphate. The protein operates within amino-acid biosynthesis; L-tryptophan biosynthesis; L-tryptophan from chorismate: step 3/5. The sequence is that of N-(5'-phosphoribosyl)anthranilate isomerase from Synechococcus sp. (strain JA-3-3Ab) (Cyanobacteria bacterium Yellowstone A-Prime).